The sequence spans 317 residues: Protoheme IX farnesyltransferase (317 aa).

Helical transmembrane passes span 43–63 (PISV…AGAT), 65–85 (PVSG…CAGA), 119–139 (ALYW…NLNP), 140–160 (IAWI…SLWL), 168–188 (IVIG…AVTG), 195–215 (VLIA…LAIF), 238–258 (LNWL…IYFV), 261–281 (WGLV…ALSV), and 292–312 (AWVL…SMMV).

This sequence belongs to the UbiA prenyltransferase family. Protoheme IX farnesyltransferase subfamily. In terms of assembly, interacts with CtaA.

It is found in the cell membrane. The enzyme catalyses heme b + (2E,6E)-farnesyl diphosphate + H2O = Fe(II)-heme o + diphosphate. It participates in porphyrin-containing compound metabolism; heme O biosynthesis; heme O from protoheme: step 1/1. Its function is as follows. Converts heme B (protoheme IX) to heme O by substitution of the vinyl group on carbon 2 of heme B porphyrin ring with a hydroxyethyl farnesyl side group. In Desulforudis audaxviator (strain MP104C), this protein is Protoheme IX farnesyltransferase.